The primary structure comprises 244 residues: Lymphotoxin-beta (244 aa).

At Met1–Ser18 the chain is on the cytoplasmic side. Residues Leu19–Pro48 form a helical; Signal-anchor for type II membrane protein membrane-spanning segment. The Extracellular segment spans residues Gln49–Gly244. The THD domain occupies Pro88 to Val243. A glycan (N-linked (GlcNAc...) asparagine) is linked at Asn222.

It belongs to the tumor necrosis factor family. In terms of assembly, heterotrimer of either two LTB and one LTA subunits or (less prevalent) two LTA and one LTB subunits.

It is found in the membrane. Cytokine that binds to LTBR/TNFRSF3. May play a specific role in immune response regulation. Provides the membrane anchor for the attachment of the heterotrimeric complex to the cell surface. This is Lymphotoxin-beta (LTB) from Pan troglodytes (Chimpanzee).